Reading from the N-terminus, the 398-residue chain is MSQKLILVLNCGSSSLKGAVLDNGSGEVLLSCLAEKLNLPDAYITFKVNGEKHKVDLSAHPDHTGAVEALMEELKAHGLDSRIGAIGHRVVSGGELYSESILVDDEVIAGIEKCIPLAPLHNPAHLLGLRAAQSIFKDLPNVVVFDTSFHQTMPEVAYKYAVPQELYEKYGLRRYGAHGTSYRFVADETARFLGKDKKDLRMVIAHLGNGASITAVANGESRDTSMGLTPLEGLVMGTRSGDIDPSVFGFLAENANMTIAQITEMLNKKSGLLGISGLSNDCRTIEEEAAKGHKGAKLALDMFIYRLAKYIGSMAVAAGGLDALVFTGGIGENSDIIRERVIGYLGFLGLNIDQEANLKARFGNAGVITTADSKAVAVVIPTNEELMIAHDTARLSGL.

Asn-10 contacts Mg(2+). Lys-17 contacts ATP. Arg-89 contributes to the substrate binding site. Residue Asp-146 is the Proton donor/acceptor of the active site. Residues His-206 to Gly-210, Asp-281 to Arg-283, and Gly-329 to Asn-333 contribute to the ATP site. Residue Glu-384 participates in Mg(2+) binding.

This sequence belongs to the acetokinase family. Homodimer. It depends on Mg(2+) as a cofactor. Requires Mn(2+) as cofactor.

It is found in the cytoplasm. The enzyme catalyses acetate + ATP = acetyl phosphate + ADP. It functions in the pathway metabolic intermediate biosynthesis; acetyl-CoA biosynthesis; acetyl-CoA from acetate: step 1/2. In terms of biological role, catalyzes the formation of acetyl phosphate from acetate and ATP. Can also catalyze the reverse reaction. The chain is Acetate kinase 1 from Neisseria meningitidis serogroup A / serotype 4A (strain DSM 15465 / Z2491).